The following is a 1052-amino-acid chain: Eukaryotic translation initiation factor 3 subunit A (1052 aa).

Positions 92-121 (LKKFIELAEKKVTEAQAKADEIQSSLESAA) form a coiled coil. Residues 339–523 (MTKAASFVLL…GVLTFDTDVF (185 aa)) form the PCI domain. Residues 580-906 (EARLQAKRAA…AEARRAARRT (327 aa)) adopt a coiled-coil conformation. Basic and acidic residues-rich tracts occupy residues 617–632 (AATDALQRKQREEETR) and 794–901 (KEVS…EARR). Disordered stretches follow at residues 617 to 646 (AATDALQRKQREEETRKRIRTQQLQEAEKQ) and 794 to 1052 (KEVS…QGGQ). Low complexity-rich tracts occupy residues 905-927 (RTGGAEPEAAPERAAPTERTAPR) and 948-964 (KEAAGGTPAAPAAAAPE). The segment covering 1013 to 1028 (GSSQPPSRTQTPGSSS) has biased composition (polar residues).

It belongs to the eIF-3 subunit A family. In terms of assembly, component of the eukaryotic translation initiation factor 3 (eIF-3) complex.

The protein resides in the cytoplasm. Its function is as follows. RNA-binding component of the eukaryotic translation initiation factor 3 (eIF-3) complex, which is involved in protein synthesis of a specialized repertoire of mRNAs and, together with other initiation factors, stimulates binding of mRNA and methionyl-tRNAi to the 40S ribosome. The eIF-3 complex specifically targets and initiates translation of a subset of mRNAs involved in cell proliferation. The chain is Eukaryotic translation initiation factor 3 subunit A (tif32) from Aspergillus niger (strain ATCC MYA-4892 / CBS 513.88 / FGSC A1513).